A 287-amino-acid chain; its full sequence is Nucleotide-binding protein mma_3120 (287 aa).

An ATP-binding site is contributed by 8–15 (GISGSGKS). GTP is bound at residue 57 to 60 (DARS).

It belongs to the RapZ-like family.

Functionally, displays ATPase and GTPase activities. The sequence is that of Nucleotide-binding protein mma_3120 from Janthinobacterium sp. (strain Marseille) (Minibacterium massiliensis).